The primary structure comprises 89 residues: HssA/B-like protein 15 (89 aa).

The protein belongs to the hssA/B family.

The sequence is that of HssA/B-like protein 15 (hssl15) from Dictyostelium discoideum (Social amoeba).